Consider the following 443-residue polypeptide: F-box only protein 39 (443 aa).

Residues 16 to 61 enclose the F-box domain; that stretch reads WATLPDVCLRRVFWWLGDRDRSRAALVCRKWNQMMYSADLWRYRTI.

In terms of assembly, directly interacts with SKP1 and CUL1.

In terms of biological role, substrate-recognition component of the SCF (SKP1-CUL1-F-box protein)-type E3 ubiquitin ligase complex. This Bos taurus (Bovine) protein is F-box only protein 39 (FBXO39).